We begin with the raw amino-acid sequence, 414 residues long: 5-aminolevulinate synthase (414 aa).

3 residues coordinate substrate: Arg-22, Ser-133, and Lys-152. Positions 185, 213, and 241 each coordinate pyridoxal 5'-phosphate. Lys-244 is a catalytic residue. N6-(pyridoxal phosphate)lysine is present on Lys-244. Positions 273 and 274 each coordinate pyridoxal 5'-phosphate. Position 359 (Thr-359) interacts with substrate.

The protein belongs to the class-II pyridoxal-phosphate-dependent aminotransferase family. Homodimer. Requires pyridoxal 5'-phosphate as cofactor.

It catalyses the reaction succinyl-CoA + glycine + H(+) = 5-aminolevulinate + CO2 + CoA. Its pathway is porphyrin-containing compound metabolism; protoporphyrin-IX biosynthesis; 5-aminolevulinate from glycine: step 1/1. The protein is 5-aminolevulinate synthase (hemA) of Rickettsia conorii (strain ATCC VR-613 / Malish 7).